A 448-amino-acid chain; its full sequence is Probable tryptophanase (448 aa).

Residue lysine 253 is modified to N6-(pyridoxal phosphate)lysine.

This sequence belongs to the beta-eliminating lyase family. The cofactor is pyridoxal 5'-phosphate.

It catalyses the reaction L-tryptophan + H2O = indole + pyruvate + NH4(+). It functions in the pathway amino-acid degradation; L-tryptophan degradation via pyruvate pathway; indole and pyruvate from L-tryptophan: step 1/1. This is Probable tryptophanase from Halobacterium salinarum (strain ATCC 29341 / DSM 671 / R1).